The sequence spans 312 residues: Malate dehydrogenase (312 aa).

NAD(+) contacts are provided by residues glycine 12 to glycine 17 and aspartate 36. Substrate is bound by residues arginine 87 and arginine 93. Residues asparagine 100 and leucine 123–asparagine 125 each bind NAD(+). A substrate-binding site is contributed by asparagine 125. Phosphoserine is present on serine 149. Arginine 156 is a binding site for substrate. Histidine 180 serves as the catalytic Proton acceptor.

Belongs to the LDH/MDH superfamily. MDH type 3 family.

The catalysed reaction is (S)-malate + NAD(+) = oxaloacetate + NADH + H(+). Its function is as follows. Catalyzes the reversible oxidation of malate to oxaloacetate. This is Malate dehydrogenase from Oceanobacillus iheyensis (strain DSM 14371 / CIP 107618 / JCM 11309 / KCTC 3954 / HTE831).